Here is a 479-residue protein sequence, read N- to C-terminus: MFS-type transporter lnaF (479 aa).

A run of 11 helical transmembrane segments spans residues 47–67 (WIYL…GFTP), 71–91 (GLII…SGAI), 104–124 (LLCI…GPLI), 136–156 (WCFY…VFLL), 177–197 (LVGL…LSWG), 208–228 (IIGL…VQWW), 250–270 (IFSF…PIWF), 283–303 (LMSI…AVLV), 306–326 (IGFY…GAGL), 344–364 (IPFG…VQAV), and 372–392 (LAIA…ISVA). Asn-416 is a glycosylation site (N-linked (GlcNAc...) asparagine). The helical transmembrane segment at 442–462 (LAITQALYVGVALSSLAIVGA) threads the bilayer.

It belongs to the major facilitator superfamily. TCR/Tet family.

Its subcellular location is the cell membrane. MFS-type transporter; part of the lnb gene cluster that mediates the biosynthesis of diastereomeric piperazines. Lna and lnb clusters encode sets of enzymes that produce overlapping sets of previously undescribed metabolites such as piperazinomycin-like metabolites or morpholine. The lna and lnb biosynthetic pathways appear to be part of a signaling network that controls the formation of sclerotia, a resilient overwintering structure. May be involved in the secretion of the metabolites produced by the lna and lnb clusters. This Aspergillus flavus (strain ATCC 200026 / FGSC A1120 / IAM 13836 / NRRL 3357 / JCM 12722 / SRRC 167) protein is MFS-type transporter lnaF.